The following is a 361-amino-acid chain: Putative F-box protein At3g19560 (361 aa).

Residues 3–49 (MTMMSDISQDLLEEILSRVPITSLRAVKSTCKRWKDLLNDPSFSKKY) form the F-box domain.

The sequence is that of Putative F-box protein At3g19560 from Arabidopsis thaliana (Mouse-ear cress).